Reading from the N-terminus, the 318-residue chain is Ubiquinol oxidase, mitochondrial (318 aa).

Residues 1 to 46 constitute a mitochondrion transit peptide; it reads MTVMRGLLNGGRYGNRYIWTAISLRHPEVMEGNGLESAVMQWRRML. A helical membrane pass occupies residues 143–163; the sequence is AMMLETVAAVPGMVGGMLLHL. Fe cation contacts are provided by Glu147, Glu186, and His189. Residues 205–225 form a helical membrane-spanning segment; sequence LLVLAVQGVFFNSFFVLYVLS. Residues Glu237, Glu288, and His291 each contribute to the Fe cation site.

Belongs to the alternative oxidase family. In terms of assembly, homodimer; disulfide-linked. Fe cation is required as a cofactor.

Its subcellular location is the mitochondrion inner membrane. The catalysed reaction is 2 a ubiquinol + O2 = 2 a ubiquinone + 2 H2O. Functionally, catalyzes the cyanide-resistant oxidation of ubiquinol and the reduction of molecular oxygen to water, but does not translocate protons and consequently is not linked to oxidative phosphorylation. May increase respiration when the cytochrome respiratory pathway is restricted, or in response to low temperatures. The protein is Ubiquinol oxidase, mitochondrial (AOMI 1) of Mangifera indica (Mango).